The sequence spans 473 residues: Photosystem II CP43 reaction center protein (473 aa).

The propeptide occupies 1-14 (MKTLYSLRRSYPVE). Thr15 bears the N-acetylthreonine mark. Thr15 carries the phosphothreonine modification. A run of 5 helical transmembrane segments spans residues 69–93 (LFEV…PHLA), 134–155 (LIGP…KDRN), 178–200 (KALY…RKIT), 255–275 (KPFA…LSYS), and 291–312 (WFNN…ASQA). Residue Glu367 coordinates [CaMn4O5] cluster. Residues 447-471 (RARAAAAGFEKGIDRDFEPVLSMTP) form a helical membrane-spanning segment.

Belongs to the PsbB/PsbC family. PsbC subfamily. As to quaternary structure, PSII is composed of 1 copy each of membrane proteins PsbA, PsbB, PsbC, PsbD, PsbE, PsbF, PsbH, PsbI, PsbJ, PsbK, PsbL, PsbM, PsbT, PsbX, PsbY, PsbZ, Psb30/Ycf12, at least 3 peripheral proteins of the oxygen-evolving complex and a large number of cofactors. It forms dimeric complexes. The cofactor is Binds multiple chlorophylls and provides some of the ligands for the Ca-4Mn-5O cluster of the oxygen-evolving complex. It may also provide a ligand for a Cl- that is required for oxygen evolution. PSII binds additional chlorophylls, carotenoids and specific lipids..

Its subcellular location is the plastid. The protein localises to the chloroplast thylakoid membrane. Functionally, one of the components of the core complex of photosystem II (PSII). It binds chlorophyll and helps catalyze the primary light-induced photochemical processes of PSII. PSII is a light-driven water:plastoquinone oxidoreductase, using light energy to abstract electrons from H(2)O, generating O(2) and a proton gradient subsequently used for ATP formation. In Pinus thunbergii (Japanese black pine), this protein is Photosystem II CP43 reaction center protein.